We begin with the raw amino-acid sequence, 253 residues long: LexA repressor (253 aa).

The segment at residues 26 to 46 (FDEMKDALNLRSKSGIHRLIS) is a DNA-binding region (H-T-H motif). The interval 73 to 97 (MPAATGKPPLAESGPPPVTAPATDE) is disordered. Catalysis depends on for autocatalytic cleavage activity residues serine 174 and lysine 212.

The protein belongs to the peptidase S24 family. In terms of assembly, homodimer.

It catalyses the reaction Hydrolysis of Ala-|-Gly bond in repressor LexA.. Its function is as follows. Represses a number of genes involved in the response to DNA damage (SOS response), including recA and lexA. In the presence of single-stranded DNA, RecA interacts with LexA causing an autocatalytic cleavage which disrupts the DNA-binding part of LexA, leading to derepression of the SOS regulon and eventually DNA repair. In Gluconacetobacter diazotrophicus (strain ATCC 49037 / DSM 5601 / CCUG 37298 / CIP 103539 / LMG 7603 / PAl5), this protein is LexA repressor.